The primary structure comprises 361 residues: 3-isopropylmalate dehydrogenase (361 aa).

Glycine 78–glutamate 91 lines the NAD(+) pocket. Positions 98, 108, 136, and 226 each coordinate substrate. 3 residues coordinate Mg(2+): aspartate 226, aspartate 250, and aspartate 254. Glycine 284–asparagine 296 contributes to the NAD(+) binding site.

It belongs to the isocitrate and isopropylmalate dehydrogenases family. LeuB type 1 subfamily. As to quaternary structure, homodimer. Mg(2+) is required as a cofactor. It depends on Mn(2+) as a cofactor.

It localises to the cytoplasm. The enzyme catalyses (2R,3S)-3-isopropylmalate + NAD(+) = 4-methyl-2-oxopentanoate + CO2 + NADH. Its pathway is amino-acid biosynthesis; L-leucine biosynthesis; L-leucine from 3-methyl-2-oxobutanoate: step 3/4. Catalyzes the oxidation of 3-carboxy-2-hydroxy-4-methylpentanoate (3-isopropylmalate) to 3-carboxy-4-methyl-2-oxopentanoate. The product decarboxylates to 4-methyl-2 oxopentanoate. This is 3-isopropylmalate dehydrogenase from Thermosynechococcus vestitus (strain NIES-2133 / IAM M-273 / BP-1).